The primary structure comprises 528 residues: Sulfhydryl oxidase 1 (528 aa).

A signal peptide spans 1-19 (MSLIHLFLLLGLLSLEAAA). The 136-residue stretch at 35 to 170 (NVADQKDNAI…LLNWINKQIG (136 aa)) folds into the Thioredoxin domain. An N-linked (GlcNAc...) asparagine glycan is attached at Asn-47. Active-site nucleophile residues include Cys-72 and Cys-75. Cys-72 and Cys-75 are disulfide-bonded. Asn-186 and Asn-297 each carry an N-linked (GlcNAc...) asparagine glycan. A disulfide bond links Cys-292 and Cys-304. In terms of domain architecture, ERV/ALR sulfhydryl oxidase spans 295–397 (SKNETRGFSC…GDPKFPKMIW (103 aa)). FAD contacts are provided by residues Arg-300, Trp-307, His-311, Asp-341, His-345, 368–375 (WSTHNKVN), Lys-394, and Trp-397. Cys-339 and Cys-342 form a disulfide bridge. Residues Cys-403 and Cys-406 are joined by a disulfide bond.

FAD serves as cofactor. As to expression, highly expressed in roots.

The protein resides in the secreted. Its subcellular location is the cell wall. The enzyme catalyses 2 R'C(R)SH + O2 = R'C(R)S-S(R)CR' + H2O2. Its function is as follows. Sulfhydryl oxidase involved in the regulation of cation homeostasis. Positively regulates shoot accumulation of K(+) and inhibits accumulation of toxic cations. Acts at the level of root K(+) efflux systems involved in xylem loading (root symplast-xylem interface). The polypeptide is Sulfhydryl oxidase 1 (QSOX1) (Arabidopsis thaliana (Mouse-ear cress)).